The chain runs to 342 residues: Farnesyl pyrophosphate synthase 2 (342 aa).

Isopentenyl diphosphate is bound by residues K47, R50, and Q86. Residues D93 and D97 each coordinate Mg(2+). A dimethylallyl diphosphate-binding site is contributed by R102. R103 is an isopentenyl diphosphate binding site. Dimethylallyl diphosphate-binding residues include K190, T191, Q229, K246, and K255.

It belongs to the FPP/GGPP synthase family. It depends on Mg(2+) as a cofactor.

It is found in the cytoplasm. The catalysed reaction is isopentenyl diphosphate + dimethylallyl diphosphate = (2E)-geranyl diphosphate + diphosphate. The enzyme catalyses isopentenyl diphosphate + (2E)-geranyl diphosphate = (2E,6E)-farnesyl diphosphate + diphosphate. Its pathway is isoprenoid biosynthesis; farnesyl diphosphate biosynthesis; farnesyl diphosphate from geranyl diphosphate and isopentenyl diphosphate: step 1/1. The protein operates within isoprenoid biosynthesis; geranyl diphosphate biosynthesis; geranyl diphosphate from dimethylallyl diphosphate and isopentenyl diphosphate: step 1/1. In terms of biological role, catalyzes the sequential condensation of isopentenyl pyrophosphate with the allylic pyrophosphates, dimethylallyl pyrophosphate, and then with the resultant geranylpyrophosphate to the ultimate product farnesyl pyrophosphate. This is Farnesyl pyrophosphate synthase 2 (FPS2) from Lupinus albus (White lupine).